Reading from the N-terminus, the 140-residue chain is Fluoride-specific ion channel FluC 1 (140 aa).

3 consecutive transmembrane segments (helical) span residues 45–65, 82–102, and 106–126; these read IPSLLGTFIVNVLGCIAIGFL, FLGAGLIGSFTTFSAFATQTI, and LFYGIIFIAANILCGLMGVFI. 2 residues coordinate Na(+): glycine 89 and threonine 92.

It belongs to the fluoride channel Fluc/FEX (TC 1.A.43) family.

It localises to the cell membrane. It catalyses the reaction fluoride(in) = fluoride(out). Its activity is regulated as follows. Na(+) is not transported, but it plays an essential structural role and its presence is essential for fluoride channel function. Its function is as follows. Fluoride-specific ion channel. Important for reducing fluoride concentration in the cell, thus reducing its toxicity. This chain is Fluoride-specific ion channel FluC 1, found in Methanospirillum hungatei JF-1 (strain ATCC 27890 / DSM 864 / NBRC 100397 / JF-1).